The following is a 267-amino-acid chain: Acetyl-coenzyme A carboxylase carboxyl transferase subunit beta 1 (267 aa).

The CoA carboxyltransferase N-terminal domain occupies 9 to 267 (TWQACPKCGR…NYGIGRSAHG (259 aa)). Residues cysteine 13, cysteine 16, cysteine 31, and cysteine 34 each coordinate Zn(2+). The C4-type zinc finger occupies 13 to 34 (CPKCGRHVHQRQWGTYQQCPYC).

The protein belongs to the AccD/PCCB family. In terms of assembly, acetyl-CoA carboxylase is a heterohexamer composed of biotin carboxyl carrier protein (AccB), biotin carboxylase (AccC) and two subunits each of ACCase subunit alpha (AccA) and ACCase subunit beta (AccD). Zn(2+) is required as a cofactor.

It localises to the cytoplasm. It catalyses the reaction N(6)-carboxybiotinyl-L-lysyl-[protein] + acetyl-CoA = N(6)-biotinyl-L-lysyl-[protein] + malonyl-CoA. It participates in lipid metabolism; malonyl-CoA biosynthesis; malonyl-CoA from acetyl-CoA: step 1/1. Component of the acetyl coenzyme A carboxylase (ACC) complex. Biotin carboxylase (BC) catalyzes the carboxylation of biotin on its carrier protein (BCCP) and then the CO(2) group is transferred by the transcarboxylase to acetyl-CoA to form malonyl-CoA. In Lactiplantibacillus plantarum (strain ATCC BAA-793 / NCIMB 8826 / WCFS1) (Lactobacillus plantarum), this protein is Acetyl-coenzyme A carboxylase carboxyl transferase subunit beta 1.